The sequence spans 142 residues: Deoxyuridine 5'-triphosphate nucleotidohydrolase (142 aa).

Residues arginine 62–glycine 64, asparagine 75, and threonine 79–aspartate 81 each bind substrate.

Belongs to the dUTPase family. Mg(2+) is required as a cofactor.

The catalysed reaction is dUTP + H2O = dUMP + diphosphate + H(+). It functions in the pathway pyrimidine metabolism; dUMP biosynthesis; dUMP from dCTP (dUTP route): step 2/2. In terms of biological role, this enzyme is involved in nucleotide metabolism: it produces dUMP, the immediate precursor of thymidine nucleotides and it decreases the intracellular concentration of dUTP so that uracil cannot be incorporated into DNA. The sequence is that of Deoxyuridine 5'-triphosphate nucleotidohydrolase from Clostridium novyi (strain NT).